The following is a 185-amino-acid chain: MLNEIKKDAQDRMDKCVEATKTQMAKVRTGRAHPSLLDSIKVPYYGSLTPLKQVGNVSIEDSRTLAISVFDSTMIPAVEKAIMSSDLGLNPMSAGATIRVPLPALTEERRKDLIKVVRAEAENGRIAVRNVRRDANSDVKALEKEKECTEDDVHRSEDEVQKFTDAHIKLIDEILAAKEAELMEV.

This sequence belongs to the RRF family.

The protein localises to the cytoplasm. In terms of biological role, responsible for the release of ribosomes from messenger RNA at the termination of protein biosynthesis. May increase the efficiency of translation by recycling ribosomes from one round of translation to another. The polypeptide is Ribosome-recycling factor (Shewanella woodyi (strain ATCC 51908 / MS32)).